Here is a 74-residue protein sequence, read N- to C-terminus: Peptide BmKb1 (74 aa).

Residues 1-22 (MEIKYLLTVFLVLLIVSDHCQA) form the signal peptide. Residue K40 is modified to Lysine amide. Positions 46-74 (DLNGYIDHFKNFRKRDAELEELLSKLPIY) are excised as a propeptide.

This sequence belongs to the non-disulfide-bridged peptide (NDBP) superfamily. Short antimicrobial peptide (group 4) family. In terms of tissue distribution, expressed by the venom gland.

It is found in the secreted. Its subcellular location is the target cell membrane. In terms of biological role, has antibacterial activity against Gram-positive bacteria S.aureus, M.luteus, B.subtilis, and Gram-negative bacteria E.coli, and P.aeruginosa. The chain is Peptide BmKb1 from Olivierus martensii (Manchurian scorpion).